The sequence spans 465 residues: ATP synthase subunit beta (465 aa).

An ATP-binding site is contributed by 148–155 (GGAGVGKT).

This sequence belongs to the ATPase alpha/beta chains family. F-type ATPases have 2 components, CF(1) - the catalytic core - and CF(0) - the membrane proton channel. CF(1) has five subunits: alpha(3), beta(3), gamma(1), delta(1), epsilon(1). CF(0) has three main subunits: a(1), b(2) and c(9-12). The alpha and beta chains form an alternating ring which encloses part of the gamma chain. CF(1) is attached to CF(0) by a central stalk formed by the gamma and epsilon chains, while a peripheral stalk is formed by the delta and b chains.

The protein resides in the cell inner membrane. It catalyses the reaction ATP + H2O + 4 H(+)(in) = ADP + phosphate + 5 H(+)(out). Functionally, produces ATP from ADP in the presence of a proton gradient across the membrane. The catalytic sites are hosted primarily by the beta subunits. This Neisseria gonorrhoeae (strain ATCC 700825 / FA 1090) protein is ATP synthase subunit beta.